The primary structure comprises 1019 residues: Type VI secretion system spike protein VgrG2b (1019 aa).

A disordered region spans residues 268–291 (AGRPFTESRLRGHRRDARVASVSG). His-935 lines the Zn(2+) pocket. The active site involves Glu-936. Residues His-939 and Glu-983 each contribute to the Zn(2+) site.

This sequence belongs to the VgrG protein family. In terms of assembly, interacts with Tla3; this interaction promotes Tle3 loading onto VgrG2b. Interacts with host gamma-tubulin ring complex components GCP1 and GCP4. The cofactor is Zn(2+).

Its subcellular location is the secreted. In terms of biological role, part of the H2 type VI secretion system (H2-T6SS) specialized secretion system, which delivers several virulence factors in both prokaryotic and eukaryotic cells during infection. Forms the spike at the tip of the elongating tube probably formed by haemolysin co-regulated protein 2b/Hcp2b. Allows the delivery of the Tle3 antibacterial toxin to target cells where it exerts its toxicity. Additionally, acts directly as an effector and promotes internalization by interacting with the host gamma-tubulin ring complex. Elicits toxicity also in the bacterial periplasm and disrupts bacterial cell morphology. Toxicity is counteracted by a cognate immunity protein. This Pseudomonas aeruginosa (strain ATCC 15692 / DSM 22644 / CIP 104116 / JCM 14847 / LMG 12228 / 1C / PRS 101 / PAO1) protein is Type VI secretion system spike protein VgrG2b (vgrG2b).